The chain runs to 136 residues: MDLPPFDMWRDYFNLSQVVMDIIQSRKQRQEGEVAEEPNSRPQEKSEQDLEGYPGCLPTICNFCKHNGESRHVYTSHQLKTPEGVVVCPILRHYVCPLCGATGDQAHTLKYCPLNSSQQSLYRRSGRNSAGRRVKR.

Residues 27–51 (KQRQEGEVAEEPNSRPQEKSEQDLE) form a disordered region. A compositionally biased stretch (basic and acidic residues) spans 28–48 (QRQEGEVAEEPNSRPQEKSEQ). The Nanos-type zinc-finger motif lies at 60 to 114 (ICNFCKHNGESRHVYTSHQLKTPEGVVVCPILRHYVCPLCGATGDQAHTLKYCPL). Zn(2+) contacts are provided by Cys-61, Cys-64, His-77, Cys-88, Cys-96, Cys-99, His-107, and Cys-112. 2 consecutive short sequence motifs (C2HC) follow at residues 61-88 (CNFCKHNGESRHVYTSHQLKTPEGVVVC) and 96-112 (CPLCGATGDQAHTLKYC).

The protein belongs to the nanos family. In terms of assembly, interacts with CNOT1, CNOT3, CNOT6L, CNOT7 and CNOT9. In terms of tissue distribution, predominantly expressed in male germ cells. Expressed in self-renewing spermatogonial stem cells and developing gonads.

The protein resides in the cytoplasm. Its subcellular location is the P-body. It is found in the perinuclear region. Its function is as follows. Plays a key role in the sexual differentiation of germ cells by promoting the male fate but suppressing the female fate. Represses the female fate pathways by suppressing meiosis, which in turn results in the promotion of the male fate. Maintains the suppression of meiosis by preventing STRA8 expression, which is required for premeiotic DNA replication, after CYP26B1 is decreased. Regulates the localization of the CCR4-NOT deadenylation complex to P-bodies and plays a role in recruiting the complex to trigger the degradation of mRNAs involved in meiosis. Required for the maintenance of the spermatogonial stem cell population. Not essential for the assembly of P-bodies but is required for the maintenance of their normal state. The chain is Nanos homolog 2 (Nanos2) from Mus musculus (Mouse).